The primary structure comprises 393 residues: Cell division protein FtsZ 2 (393 aa).

The tract at residues 1–28 (MQDIVQDALDNAEAEQREMDGDGDGDEF) is disordered. GTP-binding positions include 40–44 (GAGNN), 127–129 (GTG), glutamate 158, arginine 161, and aspartate 204. A disordered region spans residues 339–393 (GPSTQKQADKSRRELQDVDSKQRAADDAGAGGFGGAHSDGGQDEVEQENGLDVIR). Residues 345 to 364 (QADKSRRELQDVDSKQRAAD) show a composition bias toward basic and acidic residues. Over residues 367 to 376 (GAGGFGGAHS) the composition is skewed to gly residues.

This sequence belongs to the FtsZ family. As to quaternary structure, homodimer. Polymerizes to form a dynamic ring structure in a strictly GTP-dependent manner. Interacts directly with several other division proteins.

The protein localises to the cytoplasm. Essential cell division protein that forms a contractile ring structure (Z ring) at the future cell division site. The regulation of the ring assembly controls the timing and the location of cell division. One of the functions of the FtsZ ring is to recruit other cell division proteins to the septum to produce a new cell wall between the dividing cells. Binds GTP and shows GTPase activity. Overexpression causes significant changes in cell morphology. This chain is Cell division protein FtsZ 2, found in Halobacterium salinarum (strain ATCC 29341 / DSM 671 / R1).